A 37-amino-acid polypeptide reads, in one-letter code: MKVRSSVKKICANCQIKRRHGVLRVICSNPKHKQRQG.

It belongs to the bacterial ribosomal protein bL36 family.

The protein resides in the plastid. It localises to the chloroplast. This Cyanidioschyzon merolae (strain NIES-3377 / 10D) (Unicellular red alga) protein is Large ribosomal subunit protein bL36c.